The chain runs to 108 residues: ATP-dependent Clp protease adapter protein ClpS (108 aa).

A compositionally biased stretch (basic and acidic residues) spans 1–10 (MADSDKHGDE). A disordered region spans residues 1–21 (MADSDKHGDEGPSTGVVVKAK).

Belongs to the ClpS family. In terms of assembly, binds to the N-terminal domain of the chaperone ClpA.

In terms of biological role, involved in the modulation of the specificity of the ClpAP-mediated ATP-dependent protein degradation. This is ATP-dependent Clp protease adapter protein ClpS from Rhodospirillum centenum (strain ATCC 51521 / SW).